The following is a 318-amino-acid chain: Large ribosomal subunit protein uL10 (318 aa).

Tyrosine 24 bears the Phosphotyrosine mark. The residue at position 59 (threonine 59) is a Phosphothreonine. Lysine 264 is covalently cross-linked (Glycyl lysine isopeptide (Lys-Gly) (interchain with G-Cter in ubiquitin)). Lysine 298 participates in a covalent cross-link: Glycyl lysine isopeptide (Lys-Gly) (interchain with G-Cter in SUMO1); alternate. A Glycyl lysine isopeptide (Lys-Gly) (interchain with G-Cter in SUMO2); alternate cross-link involves residue lysine 298. The interval 298–318 is disordered; sequence KVEAKEESEESDEDMGFGLFD. Residues 303 to 312 show a composition bias toward acidic residues; sequence EESEESDEDM. A phosphoserine mark is found at serine 305 and serine 308.

It belongs to the universal ribosomal protein uL10 family. As to quaternary structure, P0 forms a pentameric complex by interaction with dimers of P1 and P2. Identified in a IGF2BP1-dependent mRNP granule complex containing untranslated mRNAs. Interacts with APEX1. Interacts with FMR1. In terms of processing, ubiquitinated at Lys-264 by RNF14 and RNF25 in response to ribosome collisions (ribosome stalling).

Its subcellular location is the nucleus. The protein resides in the cytoplasm. Functionally, ribosomal protein P0 is the functional equivalent of E.coli protein L10. This is Large ribosomal subunit protein uL10 (RPLP0) from Sus scrofa (Pig).